A 237-amino-acid polypeptide reads, in one-letter code: Protein VP5 (237 aa).

Topologically, residues Met1 to Arg148 are cytoplasmic. The segment at Ser84–Cys237 is disordered. Basic and acidic residues-rich tracts occupy residues Ser85 to Lys97 and Ser116 to Ile130. The chain crosses the membrane as a helical span at residues Gly149–Ser165. Over Arg166–Cys237 the chain is Extracellular. A compositionally biased stretch (basic residues) spans Arg214–Gly231.

It is found in the host membrane. The protein is Protein VP5 (VP5) of Drosophila x virus (isolate Chung/1996) (DXV).